The chain runs to 310 residues: Olfactory receptor 1496 (310 aa).

The Extracellular segment spans residues 1-23 (MNNQTFITQFLLLGLPIPEEHQH). Asparagine 3 carries an N-linked (GlcNAc...) asparagine glycan. A helical membrane pass occupies residues 24–48 (LFYALFLVMYLTTILGNLLIIVLVQ). Residues 49–55 (LDSQLHT) lie on the Cytoplasmic side of the membrane. A helical membrane pass occupies residues 56–77 (PMYLFLSNLSFSDLCFSSVTMP). At 78-98 (KLLQNMRSQDTSIPYGGCLAQ) the chain is on the extracellular side. An intrachain disulfide couples cysteine 95 to cysteine 187. A helical membrane pass occupies residues 99–118 (TYFFMVFGDMESFLLVAMAY). Residues 119–137 (DRYVAICFPLHYTSIMSPK) are Cytoplasmic-facing. A helical transmembrane segment spans residues 138 to 156 (LCTCLVLLLWMLTTSHAMM). Residues 157–194 (HTLLAARLSFCENNVVLNFFCDLFVLLKLACSDTYINE) lie on the Extracellular side of the membrane. Residues 195–217 (LMIFIMSTLLIIIPFFLIVMSYA) traverse the membrane as a helical segment. Residues 218 to 234 (RIISSILKVPSTQGICK) are Cytoplasmic-facing. The helical transmembrane segment at 235 to 258 (VFSTCGSHLSVVSLFYGTIIGLYL) threads the bilayer. Over 259–270 (CPAGNNSTVKEM) the chain is Extracellular. The chain crosses the membrane as a helical span at residues 271 to 290 (VMAMMYTVVTPMLNPFIYSL). Residues 291–310 (RNRDMKRALIRVICSMKITL) are Cytoplasmic-facing.

The protein belongs to the G-protein coupled receptor 1 family. Olfactory epithelium.

It is found in the cell membrane. In terms of biological role, odorant receptor. The protein is Olfactory receptor 1496 (Olr1496) of Rattus norvegicus (Rat).